Consider the following 709-residue polypeptide: Polyribonucleotide nucleotidyltransferase (709 aa).

The Mg(2+) site is built by Asp-487 and Asp-493. The 60-residue stretch at 554–613 (PRIHTMKISSDKIKDVIGKGGAVIRALCEETGTTIEIEDDGTIKIAATEGAAAKEAIRRI) folds into the KH domain. The S1 motif domain occupies 623 to 691 (GKIYTGKVMR…RQGRIRLSIK (69 aa)).

Belongs to the polyribonucleotide nucleotidyltransferase family. As to quaternary structure, component of the RNA degradosome, which is a multiprotein complex involved in RNA processing and mRNA degradation. Requires Mg(2+) as cofactor.

The protein localises to the cytoplasm. It catalyses the reaction RNA(n+1) + phosphate = RNA(n) + a ribonucleoside 5'-diphosphate. In terms of biological role, involved in mRNA degradation. Catalyzes the phosphorolysis of single-stranded polyribonucleotides processively in the 3'- to 5'-direction. The chain is Polyribonucleotide nucleotidyltransferase from Aliivibrio fischeri (strain MJ11) (Vibrio fischeri).